The chain runs to 139 residues: Transcription initiation factor IIA small chain homolog (139 aa).

Residues 113 to 139 (LSAQGPSKRVNRAHAAAAGDDEDDDSD) form a disordered region.

It belongs to the TFIIA subunit 2 family.

It is found in the nucleus. This chain is Transcription initiation factor IIA small chain homolog, found in Caenorhabditis elegans.